A 405-amino-acid polypeptide reads, in one-letter code: S-adenosylmethionine synthase (405 aa).

Position 141–146 (141–146 (GQGSVD)) interacts with ATP.

This sequence belongs to the AdoMet synthase 2 family. Requires Mg(2+) as cofactor.

It catalyses the reaction L-methionine + ATP + H2O = S-adenosyl-L-methionine + phosphate + diphosphate. The protein operates within amino-acid biosynthesis; S-adenosyl-L-methionine biosynthesis; S-adenosyl-L-methionine from L-methionine: step 1/1. Catalyzes the formation of S-adenosylmethionine from methionine and ATP. The chain is S-adenosylmethionine synthase from Methanococcus maripaludis (strain C6 / ATCC BAA-1332).